We begin with the raw amino-acid sequence, 207 residues long: Ribosomal RNA small subunit methyltransferase G (207 aa).

S-adenosyl-L-methionine-binding positions include G73, L78, 124-125, and R139; that span reads VE.

It belongs to the methyltransferase superfamily. RNA methyltransferase RsmG family.

It localises to the cytoplasm. It catalyses the reaction guanosine(527) in 16S rRNA + S-adenosyl-L-methionine = N(7)-methylguanosine(527) in 16S rRNA + S-adenosyl-L-homocysteine. Its function is as follows. Specifically methylates the N7 position of guanine in position 527 of 16S rRNA. The polypeptide is Ribosomal RNA small subunit methyltransferase G (Escherichia coli O1:K1 / APEC).